Consider the following 497-residue polypeptide: Protein DETOXIFICATION 25 (497 aa).

The next 12 helical transmembrane spans lie at 43–63 (LPSTLFRVMSFGCVVVAQAFI), 70–90 (GLAAYALLQSTFIRFIYGIMA), 121–141 (IVDTFIATLFVPFIVLAGPIL), 157–177 (IYPWVIPYLYSIVFTMTMQMY), 186–206 (IIGILSTLALVLDIAATWWCV), 216–236 (ALLGLNISSWSVAIAEFVYVF), 261–281 (LSISSGFMLCLEYWYMSIIVL), 291–311 (IAISAFSICQYIYSWEMNICF), 339–359 (VVLVVSAVIGVICSALCLAFG), 381–401 (IVLSISILFNIIQPILSGVAI), 416–436 (SYYAIGVPLGVLLVYVFNFGI), and 438–458 (GLWSGMLAGVGIQTLILCYVI).

The protein belongs to the multi antimicrobial extrusion (MATE) (TC 2.A.66.1) family.

It is found in the membrane. The chain is Protein DETOXIFICATION 25 from Arabidopsis thaliana (Mouse-ear cress).